The following is a 44-amino-acid chain: Photosystem I reaction center subunit IX (44 aa).

A helical transmembrane segment spans residues 7–27; it reads YLSTAPVLAISWLIFVAGLLI.

Belongs to the PsaJ family.

It is found in the plastid. It localises to the chloroplast thylakoid membrane. Functionally, may help in the organization of the PsaE and PsaF subunits. The chain is Photosystem I reaction center subunit IX from Larix decidua (European larch).